The following is a 180-amino-acid chain: Pro-glucagon (180 aa).

The first 20 residues, 1-20, serve as a signal peptide directing secretion; that stretch reads MKTVYIVAGLFVMLVQGSWQ. Residues 23-59 are disordered; that stretch reads PQDTEENARSFPASQTEPLEDPDQINEDKRHSQGTFT. The residue at position 54 (serine 54) is a Phosphoserine. A propeptide spanning residues 84–89 is cleaved from the precursor; the sequence is NRNNIA. 2 positions are modified to phosphoserine: serine 105 and serine 108. Arginine 127 bears the Arginine amide mark. A propeptide spanning residues 131-145 is cleaved from the precursor; sequence DFPEEVAIAEELGRR. Serine 150 and serine 152 each carry phosphoserine.

This sequence belongs to the glucagon family. Proglucagon is post-translationally processed in a tissue-specific manner in pancreatic A cells and intestinal L cells. In pancreatic A cells, the major bioactive hormone is glucagon cleaved by PCSK2/PC2. In the intestinal L cells PCSK1/PC1 liberates GLP-1, GLP-2, glicentin and oxyntomodulin. GLP-1 is further N-terminally truncated by post-translational processing in the intestinal L cells resulting in GLP-1(7-37) GLP-1-(7-36)amide. The C-terminal amidation is neither important for the metabolism of GLP-1 nor for its effects on the endocrine pancreas. Glucagon is secreted in the A cells of the islets of Langerhans. GLP-1, GLP-2, oxyntomodulin and glicentin are secreted from enteroendocrine cells throughout the gastrointestinal tract.

Its subcellular location is the secreted. Plays a key role in glucose metabolism and homeostasis. Regulates blood glucose by increasing gluconeogenesis and decreasing glycolysis. A counterregulatory hormone of insulin, raises plasma glucose levels in response to insulin-induced hypoglycemia. Plays an important role in initiating and maintaining hyperglycemic conditions in diabetes. In terms of biological role, potent stimulator of glucose-dependent insulin release. Also stimulates insulin release in response to IL6. Plays important roles on gastric motility and the suppression of plasma glucagon levels. May be involved in the suppression of satiety and stimulation of glucose disposal in peripheral tissues, independent of the actions of insulin. Has growth-promoting activities on intestinal epithelium. May also regulate the hypothalamic pituitary axis (HPA) via effects on LH, TSH, CRH, oxytocin, and vasopressin secretion. Increases islet mass through stimulation of islet neogenesis and pancreatic beta cell proliferation. Inhibits beta cell apoptosis. Its function is as follows. Stimulates intestinal growth and up-regulates villus height in the small intestine, concomitant with increased crypt cell proliferation and decreased enterocyte apoptosis. The gastrointestinal tract, from the stomach to the colon is the principal target for GLP-2 action. Plays a key role in nutrient homeostasis, enhancing nutrient assimilation through enhanced gastrointestinal function, as well as increasing nutrient disposal. Stimulates intestinal glucose transport and decreases mucosal permeability. Functionally, may modulate gastric acid secretion and the gastro-pyloro-duodenal activity. May play an important role in intestinal mucosal growth in the early period of life. Oxyntomodulin significantly reduces food intake. This chain is Pro-glucagon (Gcg), found in Rattus norvegicus (Rat).